The following is a 215-amino-acid chain: MHIVLIGGPGTGKGTQAELLSKKYMLPVISTGHILRKISTKKTLFGEKIKNIINSGKLVPDTIIIKIITNEILHKNYTNGFILDGFPRTIKQAKNLKNTNIQIDYVFEFILPTKLIFKRIQTRTINPITGTIYNNVIQKNSELKNLKINTLKSRLDDQYPIILKRLKEHKKNIVYLKDFYINEQKHKSLKYHEINSQNTIKNVNIEIKKILENKL.

10–15 (GTGKGT) is a binding site for ATP. The tract at residues 30–59 (STGHILRKISTKKTLFGEKIKNIINSGKLV) is NMP. AMP contacts are provided by residues Thr31, Arg36, 57-59 (KLV), 85-88 (GFPR), and Gln92. Positions 122–157 (TRTINPITGTIYNNVIQKNSELKNLKINTLKSRLDD) are LID. Residues Arg123 and 132–133 (IY) each bind ATP. Arg154 and Arg165 together coordinate AMP. Asn198 contacts ATP.

The protein belongs to the adenylate kinase family. As to quaternary structure, monomer.

Its subcellular location is the cytoplasm. It carries out the reaction AMP + ATP = 2 ADP. Its pathway is purine metabolism; AMP biosynthesis via salvage pathway; AMP from ADP: step 1/1. In terms of biological role, catalyzes the reversible transfer of the terminal phosphate group between ATP and AMP. Plays an important role in cellular energy homeostasis and in adenine nucleotide metabolism. The protein is Adenylate kinase of Buchnera aphidicola subsp. Baizongia pistaciae (strain Bp).